Reading from the N-terminus, the 334-residue chain is GTP 3',8-cyclase (334 aa).

A Radical SAM core domain is found at 11–236 (GFNRKIDYLR…ESTESSMGPA (226 aa)). Arginine 20 is a binding site for GTP. Cysteine 27 and cysteine 31 together coordinate [4Fe-4S] cluster. Residue tyrosine 33 coordinates S-adenosyl-L-methionine. Cysteine 34 serves as a coordination point for [4Fe-4S] cluster. Arginine 69 contributes to the GTP binding site. Glycine 73 serves as a coordination point for S-adenosyl-L-methionine. A GTP-binding site is contributed by threonine 100. Residue serine 124 coordinates S-adenosyl-L-methionine. Lysine 161 provides a ligand contact to GTP. Residue methionine 195 coordinates S-adenosyl-L-methionine. Positions 260 and 263 each coordinate [4Fe-4S] cluster. Residue 265-267 (RVR) coordinates GTP. Cysteine 277 is a [4Fe-4S] cluster binding site.

The protein belongs to the radical SAM superfamily. MoaA family. Monomer and homodimer. It depends on [4Fe-4S] cluster as a cofactor.

The enzyme catalyses GTP + AH2 + S-adenosyl-L-methionine = (8S)-3',8-cyclo-7,8-dihydroguanosine 5'-triphosphate + 5'-deoxyadenosine + L-methionine + A + H(+). The protein operates within cofactor biosynthesis; molybdopterin biosynthesis. In terms of biological role, catalyzes the cyclization of GTP to (8S)-3',8-cyclo-7,8-dihydroguanosine 5'-triphosphate. This chain is GTP 3',8-cyclase, found in Pseudomonas putida (strain ATCC 700007 / DSM 6899 / JCM 31910 / BCRC 17059 / LMG 24140 / F1).